The sequence spans 418 residues: Caveolae-associated protein 2 (418 aa).

Residues methionine 1 to serine 42 are disordered. Residue glycine 2 is modified to N-acetylglycine. An interaction with CAVIN1 region spans residues glycine 2–alanine 168. A phosphoserine mark is found at serine 27, serine 35, serine 37, and serine 51. Coiled-coil stretches lie at residues leucine 61–glutamate 87 and arginine 126–arginine 268. Residues leucine 62 to leucine 100 are leucine-zipper. Threonine 196 is subject to Phosphothreonine. Disordered regions lie at residues valine 200–lysine 238 and isoleucine 262–glutamine 382. 3 positions are modified to phosphoserine: serine 203, serine 204, and serine 218. Acidic residues predominate over residues serine 203 to alanine 219. Residues glutamate 220 to lysine 238 are compositionally biased toward basic and acidic residues. The segment covering leucine 275–serine 287 has biased composition (polar residues). Phosphoserine is present on residues serine 283, serine 284, serine 287, serine 288, serine 293, and serine 296. Residues arginine 303–glutamate 321 are compositionally biased toward basic and acidic residues. A phosphoserine mark is found at serine 327, serine 336, serine 359, and serine 363. Positions arginine 355–aspartate 366 are enriched in polar residues. Threonine 368 carries the phosphothreonine modification. Residues threonine 368 to proline 377 are compositionally biased toward acidic residues. Tyrosine 388 is subject to Phosphotyrosine. Phosphoserine occurs at positions 390 and 396. The interval serine 396 to alanine 418 is disordered.

This sequence belongs to the CAVIN family. As to quaternary structure, component of the CAVIN complex composed of CAVIN1, CAVIN2, CAVIN3 and CAVIN4. Binds to PRKCA in the presence of phosphatidylserine. Interacts with CAVIN4; this augments the transactivation of NPPA by CAVIN4. Interacts with CAVIN1. Interacts with CAV3. Post-translationally, the N-terminus is blocked. In terms of tissue distribution, heart, adipose tissue, lung and endothelial cells (at protein level). Highly expressed in kidney and expressed at lower levels in liver, spleen, thymus, stomach, intestine and uterus.

Its subcellular location is the cytoplasm. The protein localises to the cytosol. It localises to the membrane. It is found in the caveola. Plays an important role in caveolar biogenesis and morphology. Regulates caveolae morphology by inducing membrane curvature within caveolae. Plays a role in caveola formation in a tissue-specific manner. Required for the formation of caveolae in the lung and fat endothelia but not in the heart endothelia. Negatively regulates the size or stability of CAVIN complexes in the lung endothelial cells. May play a role in targeting PRKCA to caveolae. The polypeptide is Caveolae-associated protein 2 (Cavin2) (Mus musculus (Mouse)).